The primary structure comprises 424 residues: Enolase (424 aa).

Gln-162 contacts (2R)-2-phosphoglycerate. Glu-204 acts as the Proton donor in catalysis. Mg(2+) is bound by residues Asp-241, Glu-284, and Asp-311. (2R)-2-phosphoglycerate is bound by residues Lys-336, Arg-365, Ser-366, and Lys-387. The Proton acceptor role is filled by Lys-336.

It belongs to the enolase family. It depends on Mg(2+) as a cofactor.

It localises to the cytoplasm. The protein resides in the secreted. Its subcellular location is the cell surface. The enzyme catalyses (2R)-2-phosphoglycerate = phosphoenolpyruvate + H2O. The protein operates within carbohydrate degradation; glycolysis; pyruvate from D-glyceraldehyde 3-phosphate: step 4/5. Catalyzes the reversible conversion of 2-phosphoglycerate (2-PG) into phosphoenolpyruvate (PEP). It is essential for the degradation of carbohydrates via glycolysis. In Sinorhizobium fredii (strain NBRC 101917 / NGR234), this protein is Enolase.